Here is a 391-residue protein sequence, read N- to C-terminus: NAD(P)H-quinone oxidoreductase subunit H, chloroplastic (391 aa).

It belongs to the complex I 49 kDa subunit family. In terms of assembly, NDH is composed of at least 16 different subunits, 5 of which are encoded in the nucleus.

The protein resides in the plastid. It is found in the chloroplast thylakoid membrane. It catalyses the reaction a plastoquinone + NADH + (n+1) H(+)(in) = a plastoquinol + NAD(+) + n H(+)(out). The catalysed reaction is a plastoquinone + NADPH + (n+1) H(+)(in) = a plastoquinol + NADP(+) + n H(+)(out). In terms of biological role, NDH shuttles electrons from NAD(P)H:plastoquinone, via FMN and iron-sulfur (Fe-S) centers, to quinones in the photosynthetic chain and possibly in a chloroplast respiratory chain. The immediate electron acceptor for the enzyme in this species is believed to be plastoquinone. Couples the redox reaction to proton translocation, and thus conserves the redox energy in a proton gradient. The sequence is that of NAD(P)H-quinone oxidoreductase subunit H, chloroplastic from Nephroselmis olivacea (Green alga).